We begin with the raw amino-acid sequence, 460 residues long: tRNA (guanine(37)-N(1))-methyltransferase (460 aa).

S-adenosyl-L-methionine-binding positions include histidine 204, 243 to 244, 271 to 272, and asparagine 292; these read DL and DA. The segment covering 390-428 has biased composition (low complexity); sequence ASTTTTPTTSNTNTSTTTSTTSTSTTTTESTNTNNSANN. The disordered stretch occupies residues 390–460; it reads ASTTTTPTTS…SIDTNKKLKN (71 aa). Positions 442–451 are enriched in acidic residues; that stretch reads DSNETNETDS.

Belongs to the class I-like SAM-binding methyltransferase superfamily. TRM5/TYW2 family. Monomer.

It is found in the mitochondrion matrix. Its subcellular location is the nucleus. It localises to the cytoplasm. It carries out the reaction guanosine(37) in tRNA + S-adenosyl-L-methionine = N(1)-methylguanosine(37) in tRNA + S-adenosyl-L-homocysteine + H(+). Specifically methylates the N1 position of guanosine-37 in various cytoplasmic and mitochondrial tRNAs. Methylation is not dependent on the nature of the nucleoside 5' of the target nucleoside. This is the first step in the biosynthesis of wybutosine (yW), a modified base adjacent to the anticodon of tRNAs and required for accurate decoding. This is tRNA (guanine(37)-N(1))-methyltransferase (trmt5) from Dictyostelium discoideum (Social amoeba).